Consider the following 582-residue polypeptide: Peptidyl-prolyl cis-trans isomerase FKBP10 (582 aa).

An N-terminal signal peptide occupies residues 1–26 (MFPAGPPSHSLLRLPLLQLLLLVVQA). PPIase FKBP-type domains follow at residues 62–150 (GDFV…LDVW), 174–262 (GDFV…IDVH), and 286–374 (GDFM…IDFH). N-linked (GlcNAc...) asparagine glycosylation is found at Asn70, Asn182, Asn294, Asn310, Asn352, Asn393, and Asn407. Residues 399 to 486 (GDFVRYHYNC…LFEVELVSRE (88 aa)) enclose the PPIase FKBP-type 4 domain. EF-hand domains follow at residues 497–532 (WHKDPPANLFEDMDLNKDGEVPPEEFSTFIKAQVSE) and 542–577 (DPEKTIGDMFQNQDRNQDGKITVDELKLKSDEDEER). Residues Asp510, Asn512, Asp514, Glu516, Glu521, Asp555, Asn557, Asp559, Lys561, and Glu566 each contribute to the Ca(2+) site. The interval 533–582 (GKGRLMPGQDPEKTIGDMFQNQDRNQDGKITVDELKLKSDEDEERVHEEL) is disordered. Basic and acidic residues predominate over residues 556 to 582 (RNQDGKITVDELKLKSDEDEERVHEEL). Positions 579 to 582 (HEEL) match the Prevents secretion from ER motif.

In terms of processing, glycosylated and phosphorylated.

The protein resides in the endoplasmic reticulum lumen. The catalysed reaction is [protein]-peptidylproline (omega=180) = [protein]-peptidylproline (omega=0). Its activity is regulated as follows. Inhibited by both FK506 and rapamycin, but not by cyclosporin A. Its function is as follows. PPIases accelerate the folding of proteins during protein synthesis. The polypeptide is Peptidyl-prolyl cis-trans isomerase FKBP10 (FKBP10) (Homo sapiens (Human)).